Here is a 518-residue protein sequence, read N- to C-terminus: MFS-type transporter cnsO (518 aa).

Polar residues predominate over residues 1 to 13 (MESTDSSPPLSMT). A disordered region spans residues 1–24 (MESTDSSPPLSMTDTEKKGDAVTT). Helical transmembrane passes span 99–119 (LALM…NIML), 122–142 (VGPK…TTLT), 156–176 (LMLG…LSMW), 187–207 (AIFY…AYGV), 221–241 (WLFL…LFCL), 298–318 (FMMM…SYTL), 334–354 (VMTT…GYIS), 362–382 (LCIM…WITV), and 392–412 (YFAI…VGAW). The N-linked (GlcNAc...) asparagine glycan is linked to N416. 2 helical membrane-spanning segments follow: residues 427-447 (IGLL…NIYI) and 455-475 (PLGF…PATI).

This sequence belongs to the major facilitator superfamily.

It is found in the cell membrane. In terms of biological role, MFS-type transporter; part of the gene cluster that mediates the biosynthesis of communesins, a prominent class of indole alkaloids with great potential as pharmaceuticals. With the MFS transporter cnsL, is most likely responsible for cummunesins secretion and thereby may contribute to intrinsic resistance. In Penicillium expansum (Blue mold rot fungus), this protein is MFS-type transporter cnsO.